We begin with the raw amino-acid sequence, 349 residues long: 4-hydroxy-3-methylbut-2-enyl diphosphate reductase (349 aa).

C18 contributes to the [4Fe-4S] cluster binding site. 2 residues coordinate (2E)-4-hydroxy-3-methylbut-2-enyl diphosphate: H47 and H83. Positions 47 and 83 each coordinate dimethylallyl diphosphate. Residues H47 and H83 each coordinate isopentenyl diphosphate. A [4Fe-4S] cluster-binding site is contributed by C105. H133 is a binding site for (2E)-4-hydroxy-3-methylbut-2-enyl diphosphate. A dimethylallyl diphosphate-binding site is contributed by H133. H133 contributes to the isopentenyl diphosphate binding site. E135 serves as the catalytic Proton donor. T174 provides a ligand contact to (2E)-4-hydroxy-3-methylbut-2-enyl diphosphate. C204 is a binding site for [4Fe-4S] cluster. (2E)-4-hydroxy-3-methylbut-2-enyl diphosphate is bound by residues S232, S233, N234, and S277. S232, S233, N234, and S277 together coordinate dimethylallyl diphosphate. The isopentenyl diphosphate site is built by S232, S233, N234, and S277.

It belongs to the IspH family. [4Fe-4S] cluster serves as cofactor.

The enzyme catalyses isopentenyl diphosphate + 2 oxidized [2Fe-2S]-[ferredoxin] + H2O = (2E)-4-hydroxy-3-methylbut-2-enyl diphosphate + 2 reduced [2Fe-2S]-[ferredoxin] + 2 H(+). It carries out the reaction dimethylallyl diphosphate + 2 oxidized [2Fe-2S]-[ferredoxin] + H2O = (2E)-4-hydroxy-3-methylbut-2-enyl diphosphate + 2 reduced [2Fe-2S]-[ferredoxin] + 2 H(+). Its pathway is isoprenoid biosynthesis; dimethylallyl diphosphate biosynthesis; dimethylallyl diphosphate from (2E)-4-hydroxy-3-methylbutenyl diphosphate: step 1/1. The protein operates within isoprenoid biosynthesis; isopentenyl diphosphate biosynthesis via DXP pathway; isopentenyl diphosphate from 1-deoxy-D-xylulose 5-phosphate: step 6/6. Functionally, catalyzes the conversion of 1-hydroxy-2-methyl-2-(E)-butenyl 4-diphosphate (HMBPP) into a mixture of isopentenyl diphosphate (IPP) and dimethylallyl diphosphate (DMAPP). Acts in the terminal step of the DOXP/MEP pathway for isoprenoid precursor biosynthesis. The chain is 4-hydroxy-3-methylbut-2-enyl diphosphate reductase from Bartonella bacilliformis (strain ATCC 35685 / KC583 / Herrer 020/F12,63).